We begin with the raw amino-acid sequence, 382 residues long: Na(+)/H(+) antiporter NhaA (382 aa).

10 consecutive transmembrane segments (helical) span residues 11 to 31 (FSVP…LDPA), 47 to 67 (FHFV…AVEI), 88 to 108 (LATL…NAII), 116 to 136 (GWGI…RLVF), 145 to 165 (FLLL…AVFY), 170 to 190 (HPTE…AYIL), 261 to 283 (IVVD…SSVG), 299 to 319 (LGIF…PQQV), 327 to 347 (TGLV…VAFV), and 353 to 373 (GSAK…IMLG).

The protein belongs to the NhaA Na(+)/H(+) (TC 2.A.33) antiporter family.

The protein resides in the cell inner membrane. The catalysed reaction is Na(+)(in) + 2 H(+)(out) = Na(+)(out) + 2 H(+)(in). Its function is as follows. Na(+)/H(+) antiporter that extrudes sodium in exchange for external protons. The sequence is that of Na(+)/H(+) antiporter NhaA from Geobacter sulfurreducens (strain ATCC 51573 / DSM 12127 / PCA).